The following is a 515-amino-acid chain: E3 ubiquitin-protein ligase RNF217 (515 aa).

Disordered stretches follow at residues 1–125 and 147–189; these read MGEE…VLAQ and PEAP…ADPL. Residues 10-22 are compositionally biased toward gly residues; the sequence is GSGGARASGGGSA. 2 stretches are compositionally biased toward low complexity: residues 39–49 and 147–157; these read GPRAAASSSRP and PEAPSAESPSP. Pro residues predominate over residues 158–178; the sequence is SESPPQAPLGPIPASPPPSFP. Residues 179–189 show a composition bias toward low complexity; it reads SSPLSLPADPL. The tract at residues 232–451 is TRIAD supradomain; sequence MVLMCRVCLE…LSIFGCKYRY (220 aa). Zn(2+) contacts are provided by cysteine 236, cysteine 239, cysteine 256, cysteine 259, cysteine 356, cysteine 359, histidine 364, cysteine 369, cysteine 396, and cysteine 399. The RING-type 1 zinc-finger motif lies at 236-282; sequence CRVCLEDKPIKPLPCCKKAVCEECLKIYLSSQVQLGQVEIKCPVTEC. The IBR-type zinc-finger motif lies at 301–369; that stretch reads IKYKYFLELG…HSPWHEGVNC (69 aa). The RING-type 2; atypical zinc finger occupies 396–425; sequence CPKCKIHIQRTEGCDHMTCSQCNTNFCYRC. Cysteine 409 is an active-site residue. Zn(2+) contacts are provided by cysteine 414, cysteine 417, cysteine 422, cysteine 425, histidine 438, and cysteine 447. Residues 476–496 traverse the membrane as a helical segment; the sequence is LILVLGLALGAIAVVIGLFVF.

Belongs to the RBR family. RNF217 subfamily. Interacts with HAX1.

The protein localises to the membrane. The protein resides in the cytoplasm. It catalyses the reaction [E2 ubiquitin-conjugating enzyme]-S-ubiquitinyl-L-cysteine + [acceptor protein]-L-lysine = [E2 ubiquitin-conjugating enzyme]-L-cysteine + [acceptor protein]-N(6)-ubiquitinyl-L-lysine.. The protein operates within protein modification; protein ubiquitination. Functionally, E3 ubiquitin-protein ligase which accepts ubiquitin from E2 ubiquitin-conjugating enzymes in the form of a thioester and then directly transfers the ubiquitin to targeted substrates. Mediates the degradation of the iron exporter ferroportin/SLC40A1 and thus regulates iron homeostasis. This is E3 ubiquitin-protein ligase RNF217 (Rnf217) from Mus musculus (Mouse).